Consider the following 245-residue polypeptide: Adapter protein MecA (245 aa).

It belongs to the MecA family. As to quaternary structure, homodimer.

Enables the recognition and targeting of unfolded and aggregated proteins to the ClpC protease or to other proteins involved in proteolysis. The chain is Adapter protein MecA from Streptococcus pneumoniae (strain ATCC BAA-255 / R6).